The primary structure comprises 285 residues: ATP phosphoribosyltransferase (285 aa).

It belongs to the ATP phosphoribosyltransferase family. Long subfamily. Mg(2+) is required as a cofactor.

The protein resides in the cytoplasm. It carries out the reaction 1-(5-phospho-beta-D-ribosyl)-ATP + diphosphate = 5-phospho-alpha-D-ribose 1-diphosphate + ATP. It functions in the pathway amino-acid biosynthesis; L-histidine biosynthesis; L-histidine from 5-phospho-alpha-D-ribose 1-diphosphate: step 1/9. Its activity is regulated as follows. Feedback inhibited by histidine. Catalyzes the condensation of ATP and 5-phosphoribose 1-diphosphate to form N'-(5'-phosphoribosyl)-ATP (PR-ATP). Has a crucial role in the pathway because the rate of histidine biosynthesis seems to be controlled primarily by regulation of HisG enzymatic activity. The protein is ATP phosphoribosyltransferase of Metallosphaera sedula (strain ATCC 51363 / DSM 5348 / JCM 9185 / NBRC 15509 / TH2).